The following is a 210-amino-acid chain: Guanylate kinase (210 aa).

The Guanylate kinase-like domain maps to 5–184 (GLLIVFSGPS…AAERVKHIIE (180 aa)). 12-19 (GPSGVGKG) serves as a coordination point for ATP.

It belongs to the guanylate kinase family.

The protein localises to the cytoplasm. It catalyses the reaction GMP + ATP = GDP + ADP. In terms of biological role, essential for recycling GMP and indirectly, cGMP. This chain is Guanylate kinase, found in Streptococcus mutans serotype c (strain ATCC 700610 / UA159).